A 47-amino-acid polypeptide reads, in one-letter code: Lysis protein for colicin E7 (47 aa).

A signal peptide spans 1–19 (MKKITGIILLLLAAIILAA). Residue Cys-20 is the site of N-palmitoyl cysteine attachment. Cys-20 carries the S-diacylglycerol cysteine lipid modification.

The protein localises to the cell outer membrane. Lysis proteins are required for both colicin release and partial cell lysis. This Escherichia coli protein is Lysis protein for colicin E7 (lys).